A 143-amino-acid chain; its full sequence is Large ribosomal subunit protein uL11 (143 aa).

The protein belongs to the universal ribosomal protein uL11 family. Part of the ribosomal stalk of the 50S ribosomal subunit. Interacts with L10 and the large rRNA to form the base of the stalk. L10 forms an elongated spine to which L12 dimers bind in a sequential fashion forming a multimeric L10(L12)X complex. One or more lysine residues are methylated.

In terms of biological role, forms part of the ribosomal stalk which helps the ribosome interact with GTP-bound translation factors. The polypeptide is Large ribosomal subunit protein uL11 (Herminiimonas arsenicoxydans).